The chain runs to 203 residues: FMN-dependent NADH:quinone oxidoreductase (203 aa).

Residues Ser-9, 15-17 (SVS), and 139-142 (TRGG) each bind FMN.

The protein belongs to the azoreductase type 1 family. Homodimer. The cofactor is FMN.

The enzyme catalyses 2 a quinone + NADH + H(+) = 2 a 1,4-benzosemiquinone + NAD(+). The catalysed reaction is N,N-dimethyl-1,4-phenylenediamine + anthranilate + 2 NAD(+) = 2-(4-dimethylaminophenyl)diazenylbenzoate + 2 NADH + 2 H(+). Its function is as follows. Quinone reductase that provides resistance to thiol-specific stress caused by electrophilic quinones. In terms of biological role, also exhibits azoreductase activity. Catalyzes the reductive cleavage of the azo bond in aromatic azo compounds to the corresponding amines. This chain is FMN-dependent NADH:quinone oxidoreductase, found in Albidiferax ferrireducens (strain ATCC BAA-621 / DSM 15236 / T118) (Rhodoferax ferrireducens).